A 460-amino-acid polypeptide reads, in one-letter code: Bifunctional protein GlmU (460 aa).

The segment at 1–228 is pyrophosphorylase; sequence MKNYALVLAA…NSLAMGVNDL (228 aa). UDP-N-acetyl-alpha-D-glucosamine is bound by residues 8 to 11, Lys-22, Gln-72, and 77 to 78; these read LAAG and GT. Asp-102 lines the Mg(2+) pocket. Residues Gly-139, Glu-154, Asn-169, and Asn-226 each coordinate UDP-N-acetyl-alpha-D-glucosamine. Asn-226 is a binding site for Mg(2+). The tract at residues 229-249 is linker; the sequence is YAISKAEKYLREYINKDHMLN. Residues 250–460 are N-acetyltransferase; sequence GVSMINPETI…LISPKPKKEE (211 aa). UDP-N-acetyl-alpha-D-glucosamine contacts are provided by Arg-331 and Lys-349. The Proton acceptor role is filled by His-361. 2 residues coordinate UDP-N-acetyl-alpha-D-glucosamine: Tyr-364 and Asn-375. Residues 384-385, Ala-421, and Arg-438 each bind acetyl-CoA; that span reads NY.

In the N-terminal section; belongs to the N-acetylglucosamine-1-phosphate uridyltransferase family. This sequence in the C-terminal section; belongs to the transferase hexapeptide repeat family. Homotrimer. Mg(2+) is required as a cofactor.

The protein localises to the cytoplasm. It catalyses the reaction alpha-D-glucosamine 1-phosphate + acetyl-CoA = N-acetyl-alpha-D-glucosamine 1-phosphate + CoA + H(+). It carries out the reaction N-acetyl-alpha-D-glucosamine 1-phosphate + UTP + H(+) = UDP-N-acetyl-alpha-D-glucosamine + diphosphate. It participates in nucleotide-sugar biosynthesis; UDP-N-acetyl-alpha-D-glucosamine biosynthesis; N-acetyl-alpha-D-glucosamine 1-phosphate from alpha-D-glucosamine 6-phosphate (route II): step 2/2. Its pathway is nucleotide-sugar biosynthesis; UDP-N-acetyl-alpha-D-glucosamine biosynthesis; UDP-N-acetyl-alpha-D-glucosamine from N-acetyl-alpha-D-glucosamine 1-phosphate: step 1/1. The protein operates within bacterial outer membrane biogenesis; LPS lipid A biosynthesis. Its function is as follows. Catalyzes the last two sequential reactions in the de novo biosynthetic pathway for UDP-N-acetylglucosamine (UDP-GlcNAc). The C-terminal domain catalyzes the transfer of acetyl group from acetyl coenzyme A to glucosamine-1-phosphate (GlcN-1-P) to produce N-acetylglucosamine-1-phosphate (GlcNAc-1-P), which is converted into UDP-GlcNAc by the transfer of uridine 5-monophosphate (from uridine 5-triphosphate), a reaction catalyzed by the N-terminal domain. This is Bifunctional protein GlmU from Acholeplasma laidlawii (strain PG-8A).